Reading from the N-terminus, the 195-residue chain is MAKLDDATLAQLFTEARSHNGWNPEPLPESVLRELYALTKFGPTAANGSPARFYFVTSAEAKERLAKLSSGSNGPKIMQAPCTVIIGYDLDFPQTLPKLFPHAPGAKDWFNDPVAKEWCALRNSSLQGGYFMIGARALGLDVGPMSGFDNAAVDAEFFAGTNIKSNFIVSIGHGTDEGLFPRNPRLDFDEAAKIL.

It belongs to the nitroreductase family. HadB/RutE subfamily. Requires FMN as cofactor.

The sequence is that of Putative NADH dehydrogenase/NAD(P)H nitroreductase CC_0061 from Caulobacter vibrioides (strain ATCC 19089 / CIP 103742 / CB 15) (Caulobacter crescentus).